We begin with the raw amino-acid sequence, 285 residues long: HTH-type transcriptional regulator MurR (285 aa).

The HTH rpiR-type domain occupies 1–77 (MLYLTKIRNA…MALIGEYSAS (77 aa)). Positions 37–56 (SRKMAKQLGISQSSIVKFAQ) form a DNA-binding region, H-T-H motif. Residues 128 to 268 (IIEVISKAPF…FVGLVQLNDV (141 aa)) enclose the SIS domain.

Homotetramer.

It functions in the pathway amino-sugar metabolism; N-acetylmuramate degradation [regulation]. Represses the expression of the murPQ operon involved in the uptake and degradation of N-acetylmuramic acid (MurNAc). Binds to two adjacent inverted repeats within the operator region. MurNAc 6-phosphate, the substrate of MurQ, is the specific inducer that weakens binding of MurR to the operator. This chain is HTH-type transcriptional regulator MurR, found in Escherichia coli O7:K1 (strain IAI39 / ExPEC).